Consider the following 303-residue polypeptide: Carboxypeptidase B (303 aa).

One can recognise a Peptidase M14 domain in the interval 5–298 (SYHDYDEINA…EGVKVVANFV (294 aa)). Residues His63 and Glu66 each contribute to the Zn(2+) site. Substrate contacts are provided by residues 63–66 (HARE), Arg118, and 136–137 (NR). His189 is a Zn(2+) binding site. Substrate contacts are provided by residues 190–191 (SY) and Tyr241. The Proton donor/acceptor role is filled by Glu264.

This sequence belongs to the peptidase M14 family. Zn(2+) serves as cofactor.

The protein resides in the secreted. The catalysed reaction is Preferential release of a C-terminal lysine or arginine amino acid.. In Astacus astacus (Noble crayfish), this protein is Carboxypeptidase B.